The following is a 95-amino-acid chain: Aspartyl/glutamyl-tRNA(Asn/Gln) amidotransferase subunit C (95 aa).

It belongs to the GatC family. As to quaternary structure, heterotrimer of A, B and C subunits.

The catalysed reaction is L-glutamyl-tRNA(Gln) + L-glutamine + ATP + H2O = L-glutaminyl-tRNA(Gln) + L-glutamate + ADP + phosphate + H(+). It carries out the reaction L-aspartyl-tRNA(Asn) + L-glutamine + ATP + H2O = L-asparaginyl-tRNA(Asn) + L-glutamate + ADP + phosphate + 2 H(+). In terms of biological role, allows the formation of correctly charged Asn-tRNA(Asn) or Gln-tRNA(Gln) through the transamidation of misacylated Asp-tRNA(Asn) or Glu-tRNA(Gln) in organisms which lack either or both of asparaginyl-tRNA or glutaminyl-tRNA synthetases. The reaction takes place in the presence of glutamine and ATP through an activated phospho-Asp-tRNA(Asn) or phospho-Glu-tRNA(Gln). The protein is Aspartyl/glutamyl-tRNA(Asn/Gln) amidotransferase subunit C of Clostridium botulinum (strain 657 / Type Ba4).